Consider the following 404-residue polypeptide: Zinc transporter 10 (404 aa).

The first 22 residues, 1–22, serve as a signal peptide directing secretion; it reads MESSSSSSYIPFIRQIAASVSA. At 23-49 the chain is on the extracellular side; sequence ASCDAVVGGGGDKDEECRDEAAALRLK. The helical transmembrane segment at 50–70 threads the bilayer; sequence MVAVAAILIAGAAGVAIPLVG. The Cytoplasmic portion of the chain corresponds to 71–86; that stretch reads RRRRGGGGGGGGGASS. The helical transmembrane segment at 87-107 threads the bilayer; sequence GGLFVLAKAFAAGVILATGFV. The Extracellular segment spans residues 108–129; that stretch reads HMLHDAEHALSNPCLPHSPWRR. A helical membrane pass occupies residues 130–150; it reads FPFPGFVAMLAALATLVVDFV. Topologically, residues 151–248 are cytoplasmic; sequence GTHFYERKHR…GHEEGPSARH (98 aa). A helical membrane pass occupies residues 249-269; it reads VVVSQILELGIVSHSVIIGLS. At 270-280 the chain is on the extracellular side; it reads LGVSQSPCTIK. The chain crosses the membrane as a helical span at residues 281 to 301; that stretch reads PLVAALSFHQFFEGFALGGCI. The Cytoplasmic segment spans residues 302-311; it reads SEAQLKNFSA. Residues 312-332 traverse the membrane as a helical segment; sequence FLMAFFFAITTPAGITVGAAV. Topologically, residues 333–343 are extracellular; sequence ASFYNPNSPRA. Residues 344 to 364 form a helical membrane-spanning segment; sequence LVVEGILDSMSAGILIYMALV. Topologically, residues 365-383 are cytoplasmic; the sequence is DLIAADFLSRKMSCNPRLQ. A helical membrane pass occupies residues 384–404; sequence VGSYIALFLGAMAMAALALWA.

Belongs to the ZIP transporter (TC 2.A.5) family.

It is found in the cell membrane. Zinc transporter that may be involved in zinc uptake from the rhizosphere. The polypeptide is Zinc transporter 10 (ZIP10) (Oryza sativa subsp. japonica (Rice)).